A 142-amino-acid polypeptide reads, in one-letter code: 3-hydroxyacyl-[acyl-carrier-protein] dehydratase FabZ (142 aa).

The active site involves His47.

This sequence belongs to the thioester dehydratase family. FabZ subfamily.

The protein localises to the cytoplasm. The enzyme catalyses a (3R)-hydroxyacyl-[ACP] = a (2E)-enoyl-[ACP] + H2O. In terms of biological role, involved in unsaturated fatty acids biosynthesis. Catalyzes the dehydration of short chain beta-hydroxyacyl-ACPs and long chain saturated and unsaturated beta-hydroxyacyl-ACPs. The protein is 3-hydroxyacyl-[acyl-carrier-protein] dehydratase FabZ of Coxiella burnetii (strain RSA 331 / Henzerling II).